We begin with the raw amino-acid sequence, 506 residues long: RNA-splicing ligase RtcB homolog 1 (506 aa).

Residues Asp120, Cys123, His228, His260, and His354 each coordinate Mn(2+). 227 to 231 (NHYAE) is a GMP binding site. GMP-binding positions include 354–355 (HN), 403–406 (GGSM), Ser410, 429–432 (HGAG), and Lys505. Residue His429 is the GMP-histidine intermediate of the active site.

The protein belongs to the RtcB family. As to quaternary structure, catalytic component of the tRNA-splicing ligase complex. Mn(2+) is required as a cofactor.

It carries out the reaction a 3'-end 3'-phospho-ribonucleotide-RNA + a 5'-end dephospho-ribonucleoside-RNA + GTP = a ribonucleotidyl-ribonucleotide-RNA + GMP + diphosphate. It catalyses the reaction a 3'-end 2',3'-cyclophospho-ribonucleotide-RNA + a 5'-end dephospho-ribonucleoside-RNA + GTP + H2O = a ribonucleotidyl-ribonucleotide-RNA + GMP + diphosphate + H(+). Catalytic subunit of the tRNA-splicing ligase complex that acts by directly joining spliced tRNA halves to mature-sized tRNAs by incorporating the precursor-derived splice junction phosphate into the mature tRNA as a canonical 3',5'-phosphodiester. May act as an RNA ligase with broad substrate specificity, and may function toward other RNAs. This Culex quinquefasciatus (Southern house mosquito) protein is RNA-splicing ligase RtcB homolog 1.